The sequence spans 37 residues: Photosystem I reaction center subunit VIII (37 aa).

A helical transmembrane segment spans residues Ser-9 to Leu-29.

This sequence belongs to the PsaI family.

It localises to the plastid. It is found in the chloroplast thylakoid membrane. May help in the organization of the PsaL subunit. The sequence is that of Photosystem I reaction center subunit VIII from Cucumis sativus (Cucumber).